The sequence spans 326 residues: Metal-binding protein YtgA (326 aa).

The signal sequence occupies residues 1–21 (MFFLHVRKYKHVIGGLLCLAG). The Fe(2+) site is built by H75, H141, H207, and D299.

This sequence belongs to the bacterial solute-binding protein 9 family. As to quaternary structure, monomer.

It is found in the periplasm. Its function is as follows. Part of the ATP-binding cassette (ABC) transport system YtgABCD involved in metal import. Binds Fe(2+), Mn(2+) and Ni(2+), with a preference for Fe(2+) and delivers them to the membrane permease for translocation into the cytoplasm. This is Metal-binding protein YtgA from Chlamydia muridarum (strain MoPn / Nigg).